Reading from the N-terminus, the 253-residue chain is Dof zinc finger protein DOF3.4 (253 aa).

Residues 30–84 (LPCPRCDSSNTKFCYYNNYNFSQPRHFCKACRRYWTHGGTLRDVPVGGGTRKSAK) form a Dof-type zinc finger. Residues Cys32, Cys35, Cys57, and Cys60 each coordinate Zn(2+). The disordered stretch occupies residues 73 to 103 (VPVGGGTRKSAKRSRTCSNSSSSSVSGVVSN). Over residues 90–103 (SNSSSSSVSGVVSN) the composition is skewed to low complexity.

In terms of assembly, interacts with OBF4 or OBF5. In terms of tissue distribution, constitutively expressed in the whole plant.

The protein resides in the nucleus. In terms of biological role, transcription factor that binds specifically to a 5'-AA[AG]G-3' consensus core sequence. Enhances the DNA binding of OBF transcription factors to OCS elements. This Arabidopsis thaliana (Mouse-ear cress) protein is Dof zinc finger protein DOF3.4 (DOF3.4).